A 543-amino-acid chain; its full sequence is Plant intracellular Ras-group-related LRR protein 5 (543 aa).

LRR repeat units follow at residues 239-262 (LQDV…IGSL), 264-284 (YLTK…AFGE), 285-307 (LSNL…SFGN), 309-331 (TSLA…LGKL), 332-354 (ANLR…IGSC), 356-377 (SLVE…IGKL), 378-400 (EKLE…VGSL), 402-424 (RLRE…CFAT), 426-448 (LVKL…IGNL), and 449-470 (EMLE…SFRC). The LRR 11; degenerate repeat unit spans residues 472–494 (SRLRVFHADETPLEFPPREVVKL). The short motif at 495–502 (GAQAVVKY) is the GVYW; degenerate element.

It belongs to the SHOC2 family. As to expression, widely expressed.

Functionally, leucine-rich repeat protein that likely mediates protein interactions, possibly in the context of signal transduction. The protein is Plant intracellular Ras-group-related LRR protein 5 (IRL5) of Oryza sativa subsp. japonica (Rice).